Here is a 152-residue protein sequence, read N- to C-terminus: Nucleoside diphosphate kinase (152 aa).

The ATP site is built by lysine 11, phenylalanine 59, arginine 87, threonine 93, arginine 104, and asparagine 114. Histidine 117 serves as the catalytic Pros-phosphohistidine intermediate.

This sequence belongs to the NDK family. Homotetramer. Mg(2+) serves as cofactor.

The protein localises to the cytoplasm. It catalyses the reaction a 2'-deoxyribonucleoside 5'-diphosphate + ATP = a 2'-deoxyribonucleoside 5'-triphosphate + ADP. It carries out the reaction a ribonucleoside 5'-diphosphate + ATP = a ribonucleoside 5'-triphosphate + ADP. In terms of biological role, major role in the synthesis of nucleoside triphosphates other than ATP. The ATP gamma phosphate is transferred to the NDP beta phosphate via a ping-pong mechanism, using a phosphorylated active-site intermediate. The protein is Nucleoside diphosphate kinase of Prochlorococcus marinus (strain MIT 9301).